Reading from the N-terminus, the 480-residue chain is Glycogen synthase 1 (480 aa).

Position 15 (Lys15) interacts with ADP-alpha-D-glucose.

The protein belongs to the glycosyltransferase 1 family. Bacterial/plant glycogen synthase subfamily.

It catalyses the reaction [(1-&gt;4)-alpha-D-glucosyl](n) + ADP-alpha-D-glucose = [(1-&gt;4)-alpha-D-glucosyl](n+1) + ADP + H(+). It participates in glycan biosynthesis; glycogen biosynthesis. Its function is as follows. Synthesizes alpha-1,4-glucan chains using ADP-glucose. The sequence is that of Glycogen synthase 1 (glgA1) from Rhizobium radiobacter (Agrobacterium tumefaciens).